We begin with the raw amino-acid sequence, 49 residues long: Cytochrome b559 subunit beta (49 aa).

Residues 24-40 (WLAVHVLGVPTVFFLGA) traverse the membrane as a helical segment. Histidine 28 serves as a coordination point for heme.

This sequence belongs to the PsbE/PsbF family. Heterodimer of an alpha subunit and a beta subunit. PSII is composed of 1 copy each of membrane proteins PsbA, PsbB, PsbC, PsbD, PsbE, PsbF, PsbH, PsbI, PsbJ, PsbK, PsbL, PsbM, PsbT, PsbX, PsbY, Psb30/Ycf12, peripheral proteins PsbO, CyanoQ (PsbQ), PsbU, PsbV and a large number of cofactors. It forms dimeric complexes. Heme b serves as cofactor.

The protein localises to the cellular thylakoid membrane. In terms of biological role, this b-type cytochrome is tightly associated with the reaction center of photosystem II (PSII). PSII is a light-driven water:plastoquinone oxidoreductase that uses light energy to abstract electrons from H(2)O, generating O(2) and a proton gradient subsequently used for ATP formation. It consists of a core antenna complex that captures photons, and an electron transfer chain that converts photonic excitation into a charge separation. This is Cytochrome b559 subunit beta from Prochlorococcus marinus (strain MIT 9303).